The primary structure comprises 592 residues: Catabolite repression protein creC (592 aa).

A disordered region spans residues 119 to 140 (NSALAAAPVKDPSKKRKPKNNI). WD repeat units lie at residues 248–288 (INSS…ALFI), 327–368 (LANQ…DVFR), 369–408 (SYYG…IIAR), and 411–455 (GHDS…LHRP). 2 disordered regions span residues 459–513 (HQTS…HPVE) and 556–592 (WDRP…MGSL). 2 stretches are compositionally biased toward polar residues: residues 484 to 499 (SSGN…TAAD) and 564 to 576 (SDNY…SETL). A WD 5 repeat occupies 529-566 (VGEDPICWLGFQEDTIMTSSLEGHIRTWDRPRENISDN).

Belongs to the WD repeat creC family. In terms of assembly, interacts with creB.

Functionally, component of the regulatory network controlling carbon source utilization through ubiquitination and deubiquitination involving creA, creB, creC, creD and acrB. Required to prevent the proteolysis of the CreB deubiquitinating enzyme in the absence of carbon catabolite repression. CreB deubiquitinating enzyme stabilized in a complex with the CreC leads to the expression of genes such as those in the proline and quinate pathways. This is Catabolite repression protein creC (creC) from Emericella nidulans (strain FGSC A4 / ATCC 38163 / CBS 112.46 / NRRL 194 / M139) (Aspergillus nidulans).